The primary structure comprises 103 residues: Large ribosomal subunit protein uL24 (103 aa).

The protein belongs to the universal ribosomal protein uL24 family. In terms of assembly, part of the 50S ribosomal subunit.

In terms of biological role, one of two assembly initiator proteins, it binds directly to the 5'-end of the 23S rRNA, where it nucleates assembly of the 50S subunit. One of the proteins that surrounds the polypeptide exit tunnel on the outside of the subunit. In Pediococcus pentosaceus (strain ATCC 25745 / CCUG 21536 / LMG 10740 / 183-1w), this protein is Large ribosomal subunit protein uL24.